The primary structure comprises 804 residues: Leucine--tRNA ligase (804 aa).

The 'HIGH' region signature appears at 39–50 (PFPSGKGLHVGH). A 'KMSKS' region motif is present at residues 573-577 (KMSKS). K576 contacts ATP.

The protein belongs to the class-I aminoacyl-tRNA synthetase family.

It localises to the cytoplasm. The enzyme catalyses tRNA(Leu) + L-leucine + ATP = L-leucyl-tRNA(Leu) + AMP + diphosphate. The protein is Leucine--tRNA ligase of Lactobacillus helveticus (strain DPC 4571).